Here is a 241-residue protein sequence, read N- to C-terminus: Cytochrome b6-f complex iron-sulfur subunit 2, cyanelle (241 aa).

The N-terminal 62 residues, 1 to 62, are a transit peptide targeting the cyanelle; sequence MSAFACSAVA…AAKATTFSIS (62 aa). A helical transmembrane segment spans residues 83 to 103; the sequence is LLGAIAGPTIGAGGPFVSFLV. Residues 127–223 form the Rieske domain; that stretch reads VEKWLETXKP…VNVLEDGVVA (97 aa). Cys-169, His-171, Cys-187, and His-190 together coordinate [2Fe-2S] cluster. Cys-174 and Cys-189 are joined by a disulfide.

The protein belongs to the Rieske iron-sulfur protein family. The 4 large subunits of the cytochrome b6-f complex are cytochrome b6, subunit IV (17 kDa polypeptide, petD), cytochrome f and the Rieske protein, while the 4 small subunits are petG, petL, petM and petN. The complex functions as a dimer. It depends on [2Fe-2S] cluster as a cofactor.

The protein resides in the plastid. Its subcellular location is the cyanelle thylakoid membrane. The enzyme catalyses 2 oxidized [plastocyanin] + a plastoquinol + 2 H(+)(in) = 2 reduced [plastocyanin] + a plastoquinone + 4 H(+)(out). In terms of biological role, component of the cytochrome b6-f complex, which mediates electron transfer between photosystem II (PSII) and photosystem I (PSI), cyclic electron flow around PSI, and state transitions. The sequence is that of Cytochrome b6-f complex iron-sulfur subunit 2, cyanelle (petC-2) from Cyanophora paradoxa.